A 542-amino-acid polypeptide reads, in one-letter code: Doublesex- and mab-3-related transcription factor A2 (542 aa).

A DNA-binding region (DM) is located at residues 70–117 (CARCRNHGVVSALKGHKRYCRWKDCLCAKCTLIAERQRVMAAQVALRR). The interval 201 to 316 (LQAGRPGSPL…GGSGPRQRTP (116 aa)) is disordered. Residues 314–349 (RTPLDILTRVFPGHRRGVLELVLQGCGGDVVQAIEQ) form the DMA domain.

It belongs to the DMRT family. In terms of tissue distribution, expressed in testis.

The protein localises to the nucleus. May be involved in sexual development. In Homo sapiens (Human), this protein is Doublesex- and mab-3-related transcription factor A2 (DMRTA2).